The primary structure comprises 113 residues: Iron-sulfur cluster insertion protein ErpA (113 aa).

Residues C41, C105, and C107 each coordinate iron-sulfur cluster.

Belongs to the HesB/IscA family. Homodimer. The cofactor is iron-sulfur cluster.

In terms of biological role, required for insertion of 4Fe-4S clusters for at least IspG. In Actinobacillus succinogenes (strain ATCC 55618 / DSM 22257 / CCUG 43843 / 130Z), this protein is Iron-sulfur cluster insertion protein ErpA.